The primary structure comprises 262 residues: Phosphoribosyl 1,2-cyclic phosphate 1,2-diphosphodiesterase (262 aa).

His-6, His-8, Asp-13, His-38, Glu-63, His-76, His-193, Asp-245, and His-247 together coordinate Mn(2+).

The protein belongs to the PHP family. The cofactor is Mn(2+).

It catalyses the reaction alpha-D-ribose 1,2-cyclic phosphate 5-phosphate + H2O = D-ribose 2,5-bisphosphate + H(+). It carries out the reaction D-ribose 2,5-bisphosphate + H2O = D-ribose 5-phosphate + phosphate. Involved in degradation of methylphosphonate. Catalyzes the hydrolysis of the phosphate ester at carbon-1 of 5-phospho-D-ribose 1,2-cyclic phosphate to form ribose 2,5-bisphosphate. This intermediate is then hydrolyzed to ribose-5-phosphate and inorganic phosphate. This chain is Phosphoribosyl 1,2-cyclic phosphate 1,2-diphosphodiesterase, found in Eggerthella lenta (strain ATCC 25559 / DSM 2243 / CCUG 17323 / JCM 9979 / KCTC 3265 / NCTC 11813 / VPI 0255 / 1899 B) (Eubacterium lentum).